The following is a 199-amino-acid chain: Protein GrpE (199 aa).

The protein belongs to the GrpE family. Homodimer.

It is found in the cytoplasm. Participates actively in the response to hyperosmotic and heat shock by preventing the aggregation of stress-denatured proteins, in association with DnaK and GrpE. It is the nucleotide exchange factor for DnaK and may function as a thermosensor. Unfolded proteins bind initially to DnaJ; upon interaction with the DnaJ-bound protein, DnaK hydrolyzes its bound ATP, resulting in the formation of a stable complex. GrpE releases ADP from DnaK; ATP binding to DnaK triggers the release of the substrate protein, thus completing the reaction cycle. Several rounds of ATP-dependent interactions between DnaJ, DnaK and GrpE are required for fully efficient folding. The polypeptide is Protein GrpE (Fusobacterium nucleatum subsp. nucleatum (strain ATCC 25586 / DSM 15643 / BCRC 10681 / CIP 101130 / JCM 8532 / KCTC 2640 / LMG 13131 / VPI 4355)).